A 341-amino-acid polypeptide reads, in one-letter code: AB hydrolase superfamily protein C1039.03 (341 aa).

It belongs to the AB hydrolase superfamily.

It localises to the cytoplasm. The protein localises to the nucleus. The sequence is that of AB hydrolase superfamily protein C1039.03 from Schizosaccharomyces pombe (strain 972 / ATCC 24843) (Fission yeast).